The following is a 580-amino-acid chain: External alternative NAD(P)H-ubiquinone oxidoreductase B3, mitochondrial (580 aa).

The N-terminal 38 residues, 1–38 (MRPFAYFERLSQAFHDYPSLSKILVVSTISGGGLIVYS), are a transit peptide targeting the mitochondrion. 57 to 87 (KVVLLGTGWAGASFLKTLNNSSYEVQVISPR) contacts FAD. 221–257 (LHFVVVGGGPTGVEFASELHDFVNEDLVKLYPKAKNL) provides a ligand contact to NAD(+). Positions 377–412 (KVMEDIAAIFKKADKENSGTLTMKEFHEVMSDICDR) constitute an EF-hand domain. The Ca(2+) site is built by D390, S394, T396, and E401. The Microbody targeting signal signature appears at 571–580 (FIFGRDSSRI).

The protein belongs to the NADH dehydrogenase family. FAD is required as a cofactor. Expressed at low levels in seedlings, roots, stems, buds and flowers and, to a lower extent, in leaves and cotyledons.

It is found in the mitochondrion inner membrane. The protein resides in the peroxisome. It carries out the reaction a quinone + NADH + H(+) = a quinol + NAD(+). It catalyses the reaction a ubiquinone + NADH + H(+) = a ubiquinol + NAD(+). Functionally, alternative NADH-ubiquinone oxidoreductase which catalyzes the oxidation of mitochondrial NADH does not translocate protons across the inner mitochondrial membrane. In Arabidopsis thaliana (Mouse-ear cress), this protein is External alternative NAD(P)H-ubiquinone oxidoreductase B3, mitochondrial (NDB3).